The sequence spans 455 residues: Ribulose bisphosphate carboxylase large chain (455 aa).

Lys-5 is modified (N6,N6,N6-trimethyllysine). Residues Asn-114 and Thr-164 each coordinate substrate. Lys-166 (proton acceptor) is an active-site residue. Lys-168 is a substrate binding site. 3 residues coordinate Mg(2+): Lys-192, Asp-194, and Glu-195. Residue Lys-192 is modified to N6-carboxylysine. His-285 serves as the catalytic Proton acceptor. Positions 286, 318, and 370 each coordinate substrate.

This sequence belongs to the RuBisCO large chain family. Type I subfamily. As to quaternary structure, heterohexadecamer of 8 large chains and 8 small chains; disulfide-linked. The disulfide link is formed within the large subunit homodimers. The cofactor is Mg(2+). The disulfide bond which can form in the large chain dimeric partners within the hexadecamer appears to be associated with oxidative stress and protein turnover.

Its subcellular location is the plastid. It localises to the chloroplast. The catalysed reaction is 2 (2R)-3-phosphoglycerate + 2 H(+) = D-ribulose 1,5-bisphosphate + CO2 + H2O. It carries out the reaction D-ribulose 1,5-bisphosphate + O2 = 2-phosphoglycolate + (2R)-3-phosphoglycerate + 2 H(+). RuBisCO catalyzes two reactions: the carboxylation of D-ribulose 1,5-bisphosphate, the primary event in carbon dioxide fixation, as well as the oxidative fragmentation of the pentose substrate in the photorespiration process. Both reactions occur simultaneously and in competition at the same active site. The protein is Ribulose bisphosphate carboxylase large chain of Lupinus nanus (Sky lupine).